A 215-amino-acid chain; its full sequence is Phosphatidylserine decarboxylase proenzyme (215 aa).

Ser183 (schiff-base intermediate with substrate; via pyruvic acid) is an active-site residue. Residue Ser183 is modified to Pyruvic acid (Ser); by autocatalysis.

The protein belongs to the phosphatidylserine decarboxylase family. PSD-A subfamily. As to quaternary structure, heterodimer of a large membrane-associated beta subunit and a small pyruvoyl-containing alpha subunit. Pyruvate is required as a cofactor. In terms of processing, is synthesized initially as an inactive proenzyme. Formation of the active enzyme involves a self-maturation process in which the active site pyruvoyl group is generated from an internal serine residue via an autocatalytic post-translational modification. Two non-identical subunits are generated from the proenzyme in this reaction, and the pyruvate is formed at the N-terminus of the alpha chain, which is derived from the carboxyl end of the proenzyme. The post-translation cleavage follows an unusual pathway, termed non-hydrolytic serinolysis, in which the side chain hydroxyl group of the serine supplies its oxygen atom to form the C-terminus of the beta chain, while the remainder of the serine residue undergoes an oxidative deamination to produce ammonia and the pyruvoyl prosthetic group on the alpha chain.

The protein localises to the cell membrane. The enzyme catalyses a 1,2-diacyl-sn-glycero-3-phospho-L-serine + H(+) = a 1,2-diacyl-sn-glycero-3-phosphoethanolamine + CO2. The protein operates within phospholipid metabolism; phosphatidylethanolamine biosynthesis; phosphatidylethanolamine from CDP-diacylglycerol: step 2/2. In terms of biological role, catalyzes the formation of phosphatidylethanolamine (PtdEtn) from phosphatidylserine (PtdSer). The chain is Phosphatidylserine decarboxylase proenzyme from Symbiobacterium thermophilum (strain DSM 24528 / JCM 14929 / IAM 14863 / T).